A 277-amino-acid polypeptide reads, in one-letter code: MELWLAAQAFILGVVEGLTEFLPISSTGHQIIIADLIGFGGDRAKAFNIIIQLGAILAVVWEFREKVFGVILGLPREPQAQRFTVNLLIAFLPAVVLGVAFADLIEHWLFNPITVASALVVGGLVMLWAERRQHVIEVHAVDEMNWRHALKIGCAQCLAMIPGTSRSGSTIIGGLLFGLSRKAATEFSFFLAMPTMVGAAAYSGYKHRALFENGGDLPVFALGFVVSFIFAMLAVRGLLRFIASHSYALFAWYRIGFGLLILLTWQLGVVDWSTAQG.

6 helical membrane passes run 53–73 (LGAI…VILG), 85–105 (VNLL…ADLI), 108–128 (WLFN…VMLW), 183–203 (AATE…AAYS), 215–235 (GDLP…MLAV), and 250–270 (FAWY…LGVV).

The protein belongs to the UppP family.

The protein resides in the cell inner membrane. The enzyme catalyses di-trans,octa-cis-undecaprenyl diphosphate + H2O = di-trans,octa-cis-undecaprenyl phosphate + phosphate + H(+). In terms of biological role, catalyzes the dephosphorylation of undecaprenyl diphosphate (UPP). Confers resistance to bacitracin. The chain is Undecaprenyl-diphosphatase from Azotobacter vinelandii (strain DJ / ATCC BAA-1303).